Consider the following 95-residue polypeptide: MSTNTDLSLSSYDEGQGSKFIRKAKETPFVPIGMAGFAAIVAYGLYKLKSRGNTKMSIHLIHMRVAAQGFVVGAMTLGMGYSMYQEFWANPKPKP.

Serine 2 carries the post-translational modification N-acetylserine. In terms of domain architecture, HIG1 spans 2 to 93 (STNTDLSLSS…YQEFWANPKP (92 aa)). Serine 8 carries the phosphoserine modification. 2 helical membrane-spanning segments follow: residues 28-48 (PFVP…LYKL) and 69-89 (GFVV…EFWA).

Associates with cytochrome c oxidase (COX, complex IV); proposed complex component. Also associates with respiratory chain supercomplexes.

The protein resides in the mitochondrion membrane. It localises to the mitochondrion inner membrane. Proposed subunit of cytochrome c oxidase (COX, complex IV), which is the terminal component of the mitochondrial respiratory chain that catalyzes the reduction of oxygen to water. May play a role in the assembly of respiratory supercomplexes. This chain is HIG1 domain family member 1A, mitochondrial (Higd1a), found in Mus musculus (Mouse).